The primary structure comprises 1097 residues: Nitric oxide synthase-like protein (1097 aa).

Cys77 serves as a coordination point for heme b. Residues Gln140, Trp249, Tyr250, Glu254, and Asn259 each contribute to the L-arginine site. Trp340 and Phe353 together coordinate (6R)-L-erythro-5,6,7,8-tetrahydrobiopterin. Tyr368 is a heme b binding site. Residues 387–410 (KRPINRKFHFKQIARAVKFTSKLF) are calmodulin-binding. One can recognise a Flavodoxin-like domain in the interval 420-615 (ATVLYATETG…AFRKWASSVF (196 aa)). FMN contacts are provided by residues 426–430 (TETGK) and 561–592 (VFAL…ERIH). The 246-residue stretch at 669-914 (KQFVSCTVKA…IRSAPNFHLP (246 aa)) folds into the FAD-binding FR-type domain. Residues 704–715 (YNPGDHVGIIAC) and 847–857 (LQPRFYSISSS) contribute to the FAD site. NADP(+)-binding positions include 922–940 (ILIG…WHHR) and 1019–1034 (GAHF…AEDV).

Belongs to the NOS family. Heme b serves as cofactor. The cofactor is FAD. It depends on FMN as a cofactor.

The catalysed reaction is 2 L-arginine + 3 NADPH + 4 O2 + H(+) = 2 L-citrulline + 2 nitric oxide + 3 NADP(+) + 4 H2O. Functionally, produces nitric oxide (NO) which is a messenger molecule with diverse functions throughout the body. The protein is Nitric oxide synthase-like protein of Bombyx mori (Silk moth).